A 280-amino-acid chain; its full sequence is MKEHRTRKRFGQHFLHDRNLVDRMIRTLGLQTGDTLVEIGPGRGALTYPLLEELPHLHVVELDRDLIALLRQENTPERLTIHESDALRFDFRTLKPADKPLRVIGNLPYNISTPLIFHLLAQADAISDMTFMLQKEVVERLTASPGTRDWGRLSIMVQYHCQADYLFFVPPEAFSPPPRVDSAVVRLIPHDSPPHPADDEDHLRKLVAQAFTQRRKAIRNGLKSWVSAEQFQAVGIDAGLRPDQLSVADYVALANISRPPADVEDANAPHTEQGKGDNSQ.

S-adenosyl-L-methionine is bound by residues His-13, Leu-15, Gly-40, Glu-61, Asp-85, and Asn-106. The interval 258 to 280 (RPPADVEDANAPHTEQGKGDNSQ) is disordered.

This sequence belongs to the class I-like SAM-binding methyltransferase superfamily. rRNA adenine N(6)-methyltransferase family. RsmA subfamily.

The protein localises to the cytoplasm. It carries out the reaction adenosine(1518)/adenosine(1519) in 16S rRNA + 4 S-adenosyl-L-methionine = N(6)-dimethyladenosine(1518)/N(6)-dimethyladenosine(1519) in 16S rRNA + 4 S-adenosyl-L-homocysteine + 4 H(+). Its function is as follows. Specifically dimethylates two adjacent adenosines (A1518 and A1519) in the loop of a conserved hairpin near the 3'-end of 16S rRNA in the 30S particle. May play a critical role in biogenesis of 30S subunits. The sequence is that of Ribosomal RNA small subunit methyltransferase A from Alcanivorax borkumensis (strain ATCC 700651 / DSM 11573 / NCIMB 13689 / SK2).